Here is a 317-residue protein sequence, read N- to C-terminus: Phosphatidylglycerol--prolipoprotein diacylglyceryl transferase 2 (317 aa).

4 consecutive transmembrane segments (helical) span residues 19–39 (IPLR…VWLG), 51–71 (GVIA…GRLY), 93–113 (VWEG…GAWI), and 120–140 (IPLP…QAIG). Residue Arg141 participates in a 1,2-diacyl-sn-glycero-3-phospho-(1'-sn-glycerol) binding. The next 3 membrane-spanning stretches (helical) occupy residues 180–200 (PTFL…LWAA), 211–230 (FALY…YLRI), and 241–261 (LNNW…VVSA). A disordered region spans residues 275 to 317 (GAGADGRTDDPRPADASVGLASGPPGNSTPRRATESWNVRNRS). Positions 299–317 (PGNSTPRRATESWNVRNRS) are enriched in polar residues.

Belongs to the Lgt family.

Its subcellular location is the cell membrane. The enzyme catalyses L-cysteinyl-[prolipoprotein] + a 1,2-diacyl-sn-glycero-3-phospho-(1'-sn-glycerol) = an S-1,2-diacyl-sn-glyceryl-L-cysteinyl-[prolipoprotein] + sn-glycerol 1-phosphate + H(+). It functions in the pathway protein modification; lipoprotein biosynthesis (diacylglyceryl transfer). Its function is as follows. Catalyzes the transfer of the diacylglyceryl group from phosphatidylglycerol to the sulfhydryl group of the N-terminal cysteine of a prolipoprotein, the first step in the formation of mature lipoproteins. This Streptomyces coelicolor (strain ATCC BAA-471 / A3(2) / M145) protein is Phosphatidylglycerol--prolipoprotein diacylglyceryl transferase 2.